Here is a 540-residue protein sequence, read N- to C-terminus: Calnexin homolog (540 aa).

The N-terminal stretch at 1–29 is a signal peptide; that stretch reads MELSRRKMCCYIQFCCFVLIGCFISQICA. Residues 30–469 are Lumenal-facing; the sequence is SSDAIFYESF…EKAETQPNIT (440 aa). Ser38 and Asp69 together coordinate Ca(2+). A disulfide bridge connects residues Cys112 and Cys147. Tyr116, Lys118, Tyr138, and Asp145 together coordinate an alpha-D-glucoside. The tract at residues 221 to 301 is disordered; the sequence is LIPTKTIPDP…DWDDEEDGEW (81 aa). Residues 227-360 are p domain (Extended arm); sequence IPDPDDKKPE…REIPNPDYFE (134 aa). The segment covering 228–253 has biased composition (basic and acidic residues); it reads PDPDDKKPEDWDERAKIPDPEATKPD. Tandem repeats lie at residues 229 to 240, 246 to 257, 265 to 276, 284 to 295, and 299 to 309. 2 4 X approximate repeats regions span residues 229 to 295 and 299 to 356; these read DPDD…DWDD and GEWE…IPNP. Composition is skewed to acidic residues over residues 254–285 and 292–301; these read DWDE…IDDP and DWDDEEDGEW. The cysteines at positions 311 and 317 are disulfide-linked. Repeat copies occupy residues 318–328, 332–342, and 346–356. Glu375 serves as a coordination point for an alpha-D-glucoside. Asp386 serves as a coordination point for Ca(2+). The N-linked (GlcNAc...) asparagine glycan is linked to Asn467. A helical membrane pass occupies residues 470–490; the sequence is IGVIVSIIVVIFSILLKLLFG. Residues 491-540 lie on the Cytoplasmic side of the membrane; it reads GKKAAPKVNVVPKKKEEPEASNTAEVREGEEEKTEGEVAAAPRRRPRRDT. Positions 499–540 are disordered; it reads NVVPKKKEEPEASNTAEVREGEEEKTEGEVAAAPRRRPRRDT.

Belongs to the calreticulin family.

The protein localises to the endoplasmic reticulum membrane. Functionally, calcium-binding protein that interacts with newly synthesized monoglucosylated glycoproteins in the endoplasmic reticulum. It may act in assisting protein assembly and/or in the retention within the ER of unassembled protein subunits. It seems to play a major role in the quality control apparatus of the ER by the retention of incorrectly folded proteins. The chain is Calnexin homolog from Helianthus tuberosus (Jerusalem artichoke).